The primary structure comprises 186 residues: Probable GTP-binding protein EngB (186 aa).

Residues 18–186 (SKKEVCLIGR…LMLKIIDVIS (169 aa)) form the EngB-type G domain. GTP contacts are provided by residues 26-33 (GRSNVGKS), 52-56 (GRTVT), 69-72 (DLPG), 135-138 (NKID), and 166-168 (ISA). Residues serine 33 and threonine 54 each coordinate Mg(2+).

It belongs to the TRAFAC class TrmE-Era-EngA-EngB-Septin-like GTPase superfamily. EngB GTPase family. Mg(2+) is required as a cofactor.

Functionally, necessary for normal cell division and for the maintenance of normal septation. This Mycoplasmoides gallisepticum (strain R(low / passage 15 / clone 2)) (Mycoplasma gallisepticum) protein is Probable GTP-binding protein EngB.